We begin with the raw amino-acid sequence, 157 residues long: Ubiquitin-like protein 4A (157 aa).

In terms of domain architecture, Ubiquitin-like spans 1-76 (MQLTVKALQG…LNLVVKPLEK (76 aa)). K48 is covalently cross-linked (Glycyl lysine isopeptide (Lys-Gly) (interchain with G-Cter in ubiquitin)). At S90 the chain carries Phosphoserine. Residues 96-138 (WHLISKVLARHFSAADASRVLEQLQRDYERSLSRLTLDDIERL) are required and sufficient for interaction with BAG6.

Component of the BAG6/BAT3 complex, at least composed of BAG6, UBL4A and GET4/TRC35. Interacts with BAG6; the interaction is direct and required for UBL4A protein stability. Interacts with USP13; may be indirect via BAG6. Polyubiquitinated. Ubiquitination by AMFR and deubiquitination by USP13 may regulate the interaction between the BAG6/BAT3 complex and SGTA and therefore may regulate client proteins fate.

It localises to the cytoplasm. The protein resides in the cytosol. Its subcellular location is the nucleus. Functionally, as part of a cytosolic protein quality control complex, the BAG6/BAT3 complex, maintains misfolded and hydrophobic patches-containing proteins in a soluble state and participates in their proper delivery to the endoplasmic reticulum or alternatively can promote their sorting to the proteasome where they undergo degradation. The BAG6/BAT3 complex is involved in the post-translational delivery of tail-anchored/type II transmembrane proteins to the endoplasmic reticulum membrane. Recruited to ribosomes, it interacts with the transmembrane region of newly synthesized tail-anchored proteins and together with SGTA and ASNA1 mediates their delivery to the endoplasmic reticulum. Client proteins that cannot be properly delivered to the endoplasmic reticulum are ubiquitinated and sorted to the proteasome. Similarly, the BAG6/BAT3 complex also functions as a sorting platform for proteins of the secretory pathway that are mislocalized to the cytosol either delivering them to the proteasome for degradation or to the endoplasmic reticulum. The BAG6/BAT3 complex also plays a role in the endoplasmic reticulum-associated degradation (ERAD), a quality control mechanism that eliminates unwanted proteins of the endoplasmic reticulum through their retrotranslocation to the cytosol and their targeting to the proteasome. It maintains these retrotranslocated proteins in an unfolded yet soluble state condition in the cytosol to ensure their proper delivery to the proteasome. This Oryctolagus cuniculus (Rabbit) protein is Ubiquitin-like protein 4A (UBL4A).